Consider the following 102-residue polypeptide: Small ribosomal subunit protein uS10 (102 aa).

This sequence belongs to the universal ribosomal protein uS10 family. As to quaternary structure, part of the 30S ribosomal subunit.

Its function is as follows. Involved in the binding of tRNA to the ribosomes. The chain is Small ribosomal subunit protein uS10 from Phenylobacterium zucineum (strain HLK1).